The primary structure comprises 493 residues: ATP synthase subunit beta, chloroplastic (493 aa).

An ATP-binding site is contributed by 170–177 (GGAGVGKT).

Belongs to the ATPase alpha/beta chains family. F-type ATPases have 2 components, CF(1) - the catalytic core - and CF(0) - the membrane proton channel. CF(1) has five subunits: alpha(3), beta(3), gamma(1), delta(1), epsilon(1). CF(0) has four main subunits: a(1), b(1), b'(1) and c(9-12).

The protein localises to the plastid. Its subcellular location is the chloroplast thylakoid membrane. The catalysed reaction is ATP + H2O + 4 H(+)(in) = ADP + phosphate + 5 H(+)(out). Functionally, produces ATP from ADP in the presence of a proton gradient across the membrane. The catalytic sites are hosted primarily by the beta subunits. This chain is ATP synthase subunit beta, chloroplastic, found in Adiantum capillus-veneris (Maidenhair fern).